The sequence spans 445 residues: Homoserine O-succinyltransferase (445 aa).

Residues Asn-45–Phe-411 form the AB hydrolase-1 domain. Ser-153 functions as the Nucleophile in the catalytic mechanism. Arg-223 is a binding site for substrate. Active-site residues include Asp-373 and His-406. Asp-407 is a binding site for substrate.

It belongs to the AB hydrolase superfamily. MetX family. Homodimer.

It localises to the cytoplasm. The enzyme catalyses L-homoserine + succinyl-CoA = O-succinyl-L-homoserine + CoA. Its pathway is amino-acid biosynthesis; L-methionine biosynthesis via de novo pathway; O-succinyl-L-homoserine from L-homoserine: step 1/1. Functionally, transfers a succinyl group from succinyl-CoA to L-homoserine, forming succinyl-L-homoserine. The protein is Homoserine O-succinyltransferase of Psychrobacter arcticus (strain DSM 17307 / VKM B-2377 / 273-4).